Here is a 360-residue protein sequence, read N- to C-terminus: Phospho-N-acetylmuramoyl-pentapeptide-transferase (360 aa).

A run of 10 helical transmembrane segments spans residues 25–45 (RGILGVLTALALSLWLGPWMI), 73–93 (TMGGALILTAIAVSTLLWADL), 97–117 (YVWVVLAVTLLFGAIGWVDDY), 132–152 (WKYFWQSVFGLAAAIFLYMTA), 168–188 (VSIPLGIGFVVLTYFVIVGSS), 199–219 (GLAILPTVMVAGALAVFCYLS), 236–256 (AGELIVFCAALVGAGLGFLWF), 263–283 (VFMGDVGALALGAALGTIAVI), 288–308 (VVLFIMGGVFVMETLSVIIQV), and 338–358 (VIVRFWIITVILVLIGLATLK).

Belongs to the glycosyltransferase 4 family. MraY subfamily. Mg(2+) is required as a cofactor.

It localises to the cell inner membrane. It carries out the reaction UDP-N-acetyl-alpha-D-muramoyl-L-alanyl-gamma-D-glutamyl-meso-2,6-diaminopimeloyl-D-alanyl-D-alanine + di-trans,octa-cis-undecaprenyl phosphate = di-trans,octa-cis-undecaprenyl diphospho-N-acetyl-alpha-D-muramoyl-L-alanyl-D-glutamyl-meso-2,6-diaminopimeloyl-D-alanyl-D-alanine + UMP. The protein operates within cell wall biogenesis; peptidoglycan biosynthesis. Functionally, catalyzes the initial step of the lipid cycle reactions in the biosynthesis of the cell wall peptidoglycan: transfers peptidoglycan precursor phospho-MurNAc-pentapeptide from UDP-MurNAc-pentapeptide onto the lipid carrier undecaprenyl phosphate, yielding undecaprenyl-pyrophosphoryl-MurNAc-pentapeptide, known as lipid I. This Ectopseudomonas mendocina (strain ymp) (Pseudomonas mendocina) protein is Phospho-N-acetylmuramoyl-pentapeptide-transferase.